Consider the following 249-residue polypeptide: tRNA pseudouridine synthase A (249 aa).

The active-site Nucleophile is the aspartate 52. Substrate is bound at residue tyrosine 111.

This sequence belongs to the tRNA pseudouridine synthase TruA family. Homodimer.

It catalyses the reaction uridine(38/39/40) in tRNA = pseudouridine(38/39/40) in tRNA. In terms of biological role, formation of pseudouridine at positions 38, 39 and 40 in the anticodon stem and loop of transfer RNAs. This Caulobacter sp. (strain K31) protein is tRNA pseudouridine synthase A.